The sequence spans 169 residues: Type II secretion system protein H (169 aa).

Positions 1–29 (MRVARLPLLHPHRAAPVVRRQLRGSSLLE) are cleaved as a propeptide — leader sequence. Methionine 30 bears the N-methylmethionine mark. A helical membrane pass occupies residues 32–52 (LVIALIALAGVLAAAALTGGI).

Belongs to the GSP H family. In terms of assembly, type II secretion is composed of four main components: the outer membrane complex, the inner membrane complex, the cytoplasmic secretion ATPase and the periplasm-spanning pseudopilus. Interacts with core component XpsG. Interacts with minor pseudopilins XpsI and XpsJ. In terms of processing, cleaved by prepilin peptidase. Methylated by prepilin peptidase at the amino group of the N-terminal phenylalanine once the leader sequence is cleaved by prepilin peptidase.

Its subcellular location is the cell inner membrane. In terms of biological role, component of the type II secretion system required for the energy-dependent secretion of extracellular factors such as proteases and toxins from the periplasm. Part of the pseudopilus tip complex that is critical for the recognition and binding of secretion substrates. The sequence is that of Type II secretion system protein H (xpsH) from Xanthomonas campestris pv. campestris (strain ATCC 33913 / DSM 3586 / NCPPB 528 / LMG 568 / P 25).